Consider the following 79-residue polypeptide: ATP synthase subunit c (79 aa).

2 helical membrane passes run 11-31 and 59-79; these read IAVA…IGIL and LVDA…FAVI.

Belongs to the ATPase C chain family. F-type ATPases have 2 components, F(1) - the catalytic core - and F(0) - the membrane proton channel. F(1) has five subunits: alpha(3), beta(3), gamma(1), delta(1), epsilon(1). F(0) has three main subunits: a(1), b(2) and c(10-14). The alpha and beta chains form an alternating ring which encloses part of the gamma chain. F(1) is attached to F(0) by a central stalk formed by the gamma and epsilon chains, while a peripheral stalk is formed by the delta and b chains.

It is found in the cell membrane. Its function is as follows. F(1)F(0) ATP synthase produces ATP from ADP in the presence of a proton or sodium gradient. F-type ATPases consist of two structural domains, F(1) containing the extramembraneous catalytic core and F(0) containing the membrane proton channel, linked together by a central stalk and a peripheral stalk. During catalysis, ATP synthesis in the catalytic domain of F(1) is coupled via a rotary mechanism of the central stalk subunits to proton translocation. Key component of the F(0) channel; it plays a direct role in translocation across the membrane. A homomeric c-ring of between 10-14 subunits forms the central stalk rotor element with the F(1) delta and epsilon subunits. In Buchnera aphidicola subsp. Baizongia pistaciae (strain Bp), this protein is ATP synthase subunit c.